The primary structure comprises 95 residues: MDGIKYAVFTEKSIRLLGNNQYTSNVESGSTRAEIKHWIELFFGVKVIAMNSHRLPVPGKGRRMGPLMGHRMHYRRMIITLQPGYSIPPLIEKRT.

The protein belongs to the universal ribosomal protein uL23 family. In terms of assembly, part of the 50S ribosomal subunit.

The protein resides in the plastid. Its subcellular location is the chloroplast. Binds to 23S rRNA. This chain is Large ribosomal subunit protein uL23cz/uL23cy (rpl23-A), found in Amborella trichopoda.